The following is a 113-amino-acid chain: Hydrogenase maturation factor HypA (113 aa).

Residue His-2 coordinates Ni(2+). The Zn(2+) site is built by Cys-73, Cys-76, Cys-89, and Cys-92.

The protein belongs to the HypA/HybF family.

Involved in the maturation of [NiFe] hydrogenases. Required for nickel insertion into the metal center of the hydrogenase. This chain is Hydrogenase maturation factor HypA, found in Rhizobium leguminosarum bv. viciae.